The chain runs to 123 residues: S-adenosylmethionine decarboxylase proenzyme 2 (123 aa).

S65 (schiff-base intermediate with substrate; via pyruvic acid) is an active-site residue. Residue S65 is modified to Pyruvic acid (Ser); by autocatalysis. H70 acts as the Proton acceptor; for processing activity in catalysis. The active-site Proton donor; for catalytic activity is C85.

It belongs to the prokaryotic AdoMetDC family. Type 1 subfamily. Heterotetramer of two alpha and two beta chains arranged as a dimer of alpha/beta heterodimers. Requires pyruvate as cofactor. In terms of processing, is synthesized initially as an inactive proenzyme. Formation of the active enzyme involves a self-maturation process in which the active site pyruvoyl group is generated from an internal serine residue via an autocatalytic post-translational modification. Two non-identical subunits are generated from the proenzyme in this reaction, and the pyruvate is formed at the N-terminus of the alpha chain, which is derived from the carboxyl end of the proenzyme. The post-translation cleavage follows an unusual pathway, termed non-hydrolytic serinolysis, in which the side chain hydroxyl group of the serine supplies its oxygen atom to form the C-terminus of the beta chain, while the remainder of the serine residue undergoes an oxidative deamination to produce ammonia and the pyruvoyl group blocking the N-terminus of the alpha chain.

It catalyses the reaction S-adenosyl-L-methionine + H(+) = S-adenosyl 3-(methylsulfanyl)propylamine + CO2. It participates in amine and polyamine biosynthesis; S-adenosylmethioninamine biosynthesis; S-adenosylmethioninamine from S-adenosyl-L-methionine: step 1/1. Its function is as follows. Catalyzes the decarboxylation of S-adenosylmethionine to S-adenosylmethioninamine (dcAdoMet), the propylamine donor required for the synthesis of the polyamines spermine and spermidine from the diamine putrescine. This Bacillus cereus (strain ZK / E33L) protein is S-adenosylmethionine decarboxylase proenzyme 2.